Consider the following 942-residue polypeptide: Sucrose synthase 6 (942 aa).

The segment at threonine 281–threonine 759 is GT-B glycosyltransferase. Residues threonine 830–lysine 862 form a disordered region. Over residues lysine 838–lysine 862 the composition is skewed to basic and acidic residues.

Belongs to the glycosyltransferase 1 family. Plant sucrose synthase subfamily. As to expression, detected in the whole plant but more precisely confined to the vasculature in cotyledons, leaves, petals, anthers and roots.

The protein localises to the secreted. It localises to the cell wall. The catalysed reaction is an NDP-alpha-D-glucose + D-fructose = a ribonucleoside 5'-diphosphate + sucrose + H(+). Functionally, sucrose-cleaving enzyme that provides UDP-glucose and fructose for various metabolic pathways. Functions in callose synthesis at the site of phloem sieve elements. This is Sucrose synthase 6 (SUS6) from Arabidopsis thaliana (Mouse-ear cress).